The primary structure comprises 302 residues: MRIVFMGTPDYATTILEGLLEKFEVVGVFTQPDKPVGRKQVVTPPHVKKFLIEKNVDIPIFQPSTLKSEEVYEQLHTLAPDFIVVAAYGQILPKEILQLAPCINLHASLLPKYRGASPIQHALLNGDTVTGVTAMLMDEGLDTGDILAYDVIDIQNSDNAITLFEKLSHLAKELTPKVLQSFENIAPIAQHDVDASYCKKIRKQDGQIRFSDAKVIWNKYRAFIVWPGIFLENGLKLKEIDLVETDNTHEEGKILEISDAGVVVGCRRGSICIKSVQPPSKKAMEAVAYLRGKRLKVGDTFF.

108–111 (SLLP) is a (6S)-5,6,7,8-tetrahydrofolate binding site.

Belongs to the Fmt family.

The catalysed reaction is L-methionyl-tRNA(fMet) + (6R)-10-formyltetrahydrofolate = N-formyl-L-methionyl-tRNA(fMet) + (6S)-5,6,7,8-tetrahydrofolate + H(+). Its function is as follows. Attaches a formyl group to the free amino group of methionyl-tRNA(fMet). The formyl group appears to play a dual role in the initiator identity of N-formylmethionyl-tRNA by promoting its recognition by IF2 and preventing the misappropriation of this tRNA by the elongation apparatus. The sequence is that of Methionyl-tRNA formyltransferase from Nitratiruptor sp. (strain SB155-2).